The chain runs to 1849 residues: Mitogen-activated protein kinase kinase kinase mkh1 (1849 aa).

The region spanning 1556–1825 is the Protein kinase domain; sequence WFKGQLIGKG…TKLLAEHPFC (270 aa). ATP is bound by residues 1562 to 1570 and lysine 1585; that span reads IGKGTYGRV. Aspartate 1686 functions as the Proton acceptor in the catalytic mechanism.

The protein belongs to the protein kinase superfamily. STE Ser/Thr protein kinase family. MAP kinase kinase kinase subfamily.

The catalysed reaction is L-seryl-[protein] + ATP = O-phospho-L-seryl-[protein] + ADP + H(+). It catalyses the reaction L-threonyl-[protein] + ATP = O-phospho-L-threonyl-[protein] + ADP + H(+). Functionally, mitogen-activated protein kinase kinase kinase, part of the mkh1-mkk1-spm1 MAPK cascade that regulates vegetative growth, conidial formation, colony surface hydrophobicity, osmotic stress, cell wall integrity maintenance, carbon and nitrogen source utilization, chitin distribution, septa formation, and pathogenicity. The polypeptide is Mitogen-activated protein kinase kinase kinase mkh1 (Cytospora mali (Apple Valsa canker fungus)).